The chain runs to 69 residues: ATP synthase subunits region ORF 1 (69 aa).

The polypeptide is ATP synthase subunits region ORF 1 (Fuscovulum blasticum (Rhodobacter blasticus)).